The primary structure comprises 339 residues: Glyceraldehyde-3-phosphate dehydrogenase (339 aa).

NAD(+) contacts are provided by residues 12-13 (RI), D35, and K84. Residues 155–157 (SCT), T186, 215–216 (TG), and R238 contribute to the D-glyceraldehyde 3-phosphate site. C156 functions as the Nucleophile in the catalytic mechanism. An NAD(+)-binding site is contributed by N320.

It belongs to the glyceraldehyde-3-phosphate dehydrogenase family. As to quaternary structure, homotetramer.

The protein resides in the cytoplasm. It carries out the reaction D-glyceraldehyde 3-phosphate + phosphate + NAD(+) = (2R)-3-phospho-glyceroyl phosphate + NADH + H(+). The protein operates within carbohydrate degradation; glycolysis; pyruvate from D-glyceraldehyde 3-phosphate: step 1/5. The protein is Glyceraldehyde-3-phosphate dehydrogenase (GAPD) of Mastigamoeba balamuthi (Phreatamoeba balamuthi).